We begin with the raw amino-acid sequence, 102 residues long: Small ribosomal subunit protein uS10 (102 aa).

Belongs to the universal ribosomal protein uS10 family. In terms of assembly, part of the 30S ribosomal subunit.

Its function is as follows. Involved in the binding of tRNA to the ribosomes. The chain is Small ribosomal subunit protein uS10 from Bifidobacterium animalis subsp. lactis (strain AD011).